Consider the following 244-residue polypeptide: tRNA pseudouridine synthase B (244 aa).

Catalysis depends on aspartate 46, which acts as the Nucleophile.

The protein belongs to the pseudouridine synthase TruB family. Type 1 subfamily.

The catalysed reaction is uridine(55) in tRNA = pseudouridine(55) in tRNA. In terms of biological role, responsible for synthesis of pseudouridine from uracil-55 in the psi GC loop of transfer RNAs. This chain is tRNA pseudouridine synthase B, found in Bordetella bronchiseptica (strain ATCC BAA-588 / NCTC 13252 / RB50) (Alcaligenes bronchisepticus).